Consider the following 393-residue polypeptide: Staphopain B (393 aa).

Residues 1–36 (MNSSCKTRVFNIISIIMVSMLILSLGAFANNNKAKA) form the signal peptide. The propeptide occupies 37–219 (DSHSKQLEIN…KVEENEAIQE (183 aa)). Residues Cys-243, His-340, and Asn-360 contribute to the active site.

It belongs to the peptidase C47 family. In the cytoplasm, prematurely activated/folded SspB forms a stable non-covalent complex with SspC. Post-translationally, proteolytically cleaved by staphylococcal serine protease (SspA).

Its subcellular location is the secreted. Its activity is regulated as follows. Prematurely activated/folded staphopain B is inhibited by staphostatin B (SspC), which is probably required to protect staphylococcal cytoplasmic proteins from degradation by SspB. Cysteine protease that plays an important role in the inhibition of host innate immune response. Degrades host elastin, fibrogen, fibronectin and kininogen. Blocks phagocytosis of opsonised S.aureus by neutrophils and monocytes by inducing their death in a proteolytic activity-dependent manner. Decreases surface expression of the 'don't eat me' signal CD31 on neutrophils. Cleaves host galectin-3/LGALS3, thereby inhibiting the neutrophil-activating ability of the lectin. The sequence is that of Staphopain B (sspB) from Staphylococcus aureus (strain MRSA252).